Here is a 297-residue protein sequence, read N- to C-terminus: Homoserine kinase (297 aa).

ATP is bound at residue 85 to 95 (PPTRGMGSSSA).

It belongs to the GHMP kinase family. Homoserine kinase subfamily.

The protein resides in the cytoplasm. The catalysed reaction is L-homoserine + ATP = O-phospho-L-homoserine + ADP + H(+). Its pathway is amino-acid biosynthesis; L-threonine biosynthesis; L-threonine from L-aspartate: step 4/5. Catalyzes the ATP-dependent phosphorylation of L-homoserine to L-homoserine phosphate. This Desulfitobacterium hafniense (strain DSM 10664 / DCB-2) protein is Homoserine kinase.